A 263-amino-acid polypeptide reads, in one-letter code: Regulatory protein RecX (263 aa).

It belongs to the RecX family.

It localises to the cytoplasm. In terms of biological role, modulates RecA activity. The polypeptide is Regulatory protein RecX (Bacillus velezensis (strain DSM 23117 / BGSC 10A6 / LMG 26770 / FZB42) (Bacillus amyloliquefaciens subsp. plantarum)).